A 182-amino-acid chain; its full sequence is Putative manganese efflux pump MntP 1 (182 aa).

A run of 6 helical transmembrane segments spans residues 4-24 (LLLL…GLGA), 42-62 (IFQG…IAFI), 63-83 (SAFD…KMIY), 103-123 (LILS…LHLI), 127-147 (VFLS…LGVL), and 162-182 (ILGG…HLFF).

It belongs to the MntP (TC 9.B.29) family.

It is found in the cell inner membrane. Probably functions as a manganese efflux pump. This Wolinella succinogenes (strain ATCC 29543 / DSM 1740 / CCUG 13145 / JCM 31913 / LMG 7466 / NCTC 11488 / FDC 602W) (Vibrio succinogenes) protein is Putative manganese efflux pump MntP 1.